A 196-amino-acid polypeptide reads, in one-letter code: DnaA initiator-associating protein DiaA (196 aa).

Positions 34-196 constitute an SIS domain; it reads LVQSLLNGNK…DNTLFPHQDD (163 aa).

Belongs to the SIS family. DiaA subfamily. As to quaternary structure, homotetramer; dimer of dimers.

Required for the timely initiation of chromosomal replication via direct interactions with the DnaA initiator protein. The sequence is that of DnaA initiator-associating protein DiaA from Shigella flexneri serotype 5b (strain 8401).